Here is a 216-residue protein sequence, read N- to C-terminus: Peroxiredoxin (216 aa).

The Thioredoxin domain maps to 2–158 (VVIGEKFPEV…ILRLVKALKV (157 aa)). The Cysteine sulfenic acid (-SOH) intermediate role is filled by Cys-46. Substrate is bound at residue Arg-121. Cys-205 and Cys-211 form a disulfide bridge.

This sequence belongs to the peroxiredoxin family. Prx6 subfamily. Homodecamer. Pentamer of dimers that assemble into a ring structure.

It is found in the cytoplasm. The enzyme catalyses a hydroperoxide + [thioredoxin]-dithiol = an alcohol + [thioredoxin]-disulfide + H2O. In terms of biological role, thiol-specific peroxidase that catalyzes the reduction of hydrogen peroxide and organic hydroperoxides to water and alcohols, respectively. Plays a role in cell protection against oxidative stress by detoxifying peroxides. This is Peroxiredoxin from Thermococcus kodakarensis (strain ATCC BAA-918 / JCM 12380 / KOD1) (Pyrococcus kodakaraensis (strain KOD1)).